The sequence spans 318 residues: UDP-3-O-acylglucosamine N-acyltransferase (318 aa).

Histidine 230 functions as the Proton acceptor in the catalytic mechanism.

The protein belongs to the transferase hexapeptide repeat family. LpxD subfamily. As to quaternary structure, homotrimer.

It catalyses the reaction a UDP-3-O-[(3R)-3-hydroxyacyl]-alpha-D-glucosamine + a (3R)-hydroxyacyl-[ACP] = a UDP-2-N,3-O-bis[(3R)-3-hydroxyacyl]-alpha-D-glucosamine + holo-[ACP] + H(+). Its pathway is bacterial outer membrane biogenesis; LPS lipid A biosynthesis. Functionally, catalyzes the N-acylation of UDP-3-O-acylglucosamine using 3-hydroxyacyl-ACP as the acyl donor. Is involved in the biosynthesis of lipid A, a phosphorylated glycolipid that anchors the lipopolysaccharide to the outer membrane of the cell. This is UDP-3-O-acylglucosamine N-acyltransferase from Wolinella succinogenes (strain ATCC 29543 / DSM 1740 / CCUG 13145 / JCM 31913 / LMG 7466 / NCTC 11488 / FDC 602W) (Vibrio succinogenes).